The sequence spans 183 residues: Cell division protein ZapC (183 aa).

Belongs to the ZapC family. As to quaternary structure, interacts directly with FtsZ.

It localises to the cytoplasm. Its function is as follows. Contributes to the efficiency of the cell division process by stabilizing the polymeric form of the cell division protein FtsZ. Acts by promoting interactions between FtsZ protofilaments and suppressing the GTPase activity of FtsZ. The polypeptide is Cell division protein ZapC (Proteus mirabilis (strain HI4320)).